The primary structure comprises 259 residues: Oxaloacetate tautomerase FMP41, mitochondrial (259 aa).

Mg(2+)-binding residues include glutamate 87, glutamate 89, and aspartate 121.

It belongs to the FAH family. Requires Mg(2+) as cofactor. It depends on Mn(2+) as a cofactor.

Its subcellular location is the mitochondrion. It catalyses the reaction oxaloacetate = enol-oxaloacetate. Its function is as follows. Tautomerase that converts enol-oxaloacetate, a strong inhibitor of succinate dehydrogenase, to the physiological keto form of oxaloacetate. The protein is Oxaloacetate tautomerase FMP41, mitochondrial of Saccharomyces cerevisiae (strain ATCC 204508 / S288c) (Baker's yeast).